The sequence spans 130 residues: Small ribosomal subunit protein uS9 (130 aa).

Positions 111-130 are disordered; sequence VERKKVGLHKARRATQFSKR. Residues 116–130 are compositionally biased toward basic residues; sequence VGLHKARRATQFSKR.

This sequence belongs to the universal ribosomal protein uS9 family.

In Xylella fastidiosa (strain M23), this protein is Small ribosomal subunit protein uS9.